The sequence spans 232 residues: 2,3,4,5-tetrahydropyridine-2,6-dicarboxylate N-acetyltransferase (232 aa).

The protein belongs to the transferase hexapeptide repeat family. DapH subfamily.

It catalyses the reaction (S)-2,3,4,5-tetrahydrodipicolinate + acetyl-CoA + H2O = L-2-acetamido-6-oxoheptanedioate + CoA. It participates in amino-acid biosynthesis; L-lysine biosynthesis via DAP pathway; LL-2,6-diaminopimelate from (S)-tetrahydrodipicolinate (acetylase route): step 1/3. Functionally, catalyzes the transfer of an acetyl group from acetyl-CoA to tetrahydrodipicolinate. This chain is 2,3,4,5-tetrahydropyridine-2,6-dicarboxylate N-acetyltransferase, found in Streptococcus uberis (strain ATCC BAA-854 / 0140J).